The primary structure comprises 47 residues: Heat shock protein HSP 90 (47 aa).

It belongs to the heat shock protein 90 family. As to quaternary structure, homodimer.

It localises to the cytoplasm. Its function is as follows. Putative molecular chaperone that may promote the maturation, structural maintenance and proper regulation of specific target proteins. The chain is Heat shock protein HSP 90 from Oryctolagus cuniculus (Rabbit).